Reading from the N-terminus, the 269-residue chain is dITP/XTP pyrophosphatase (269 aa).

22 to 27 is a binding site for substrate; sequence SNNAHK. Aspartate 82 functions as the Proton acceptor in the catalytic mechanism. Aspartate 82 is a binding site for Mg(2+). Substrate contacts are provided by residues serine 83, 165 to 168, lysine 188, and 193 to 194; these read FGYD and HR.

This sequence belongs to the HAM1 NTPase family. As to quaternary structure, homodimer. Mg(2+) serves as cofactor.

The enzyme catalyses XTP + H2O = XMP + diphosphate + H(+). The catalysed reaction is dITP + H2O = dIMP + diphosphate + H(+). It carries out the reaction ITP + H2O = IMP + diphosphate + H(+). Its function is as follows. Pyrophosphatase that catalyzes the hydrolysis of nucleoside triphosphates to their monophosphate derivatives, with a high preference for the non-canonical purine nucleotides XTP (xanthosine triphosphate), dITP (deoxyinosine triphosphate) and ITP. Seems to function as a house-cleaning enzyme that removes non-canonical purine nucleotides from the nucleotide pool, thus preventing their incorporation into DNA/RNA and avoiding chromosomal lesions. The sequence is that of dITP/XTP pyrophosphatase from Treponema pallidum (strain Nichols).